The sequence spans 148 residues: Putative cyclin-dependent kinase inhibitor SPL2 (148 aa).

Phosphoserine is present on residues Ser-59 and Ser-86.

It is found in the cytoplasmic granule. The protein resides in the cytoplasm. Its function is as follows. Putative cyclin-dependent kinase (CDK) inhibitor necessary and sufficient for PHO pathway-dependent down-regulation of low-affinity phosphate transport. In Saccharomyces cerevisiae (strain ATCC 204508 / S288c) (Baker's yeast), this protein is Putative cyclin-dependent kinase inhibitor SPL2 (SPL2).